The following is a 68-amino-acid chain: Large ribosomal subunit protein uL29 (68 aa).

Belongs to the universal ribosomal protein uL29 family.

The protein is Large ribosomal subunit protein uL29 of Nitrobacter winogradskyi (strain ATCC 25391 / DSM 10237 / CIP 104748 / NCIMB 11846 / Nb-255).